The chain runs to 301 residues: G-protein coupled receptor homolog U51 (301 aa).

The Extracellular portion of the chain corresponds to 1–15 (MEKETKSLAWPATAE). The helical transmembrane segment at 16–36 (FYGWVFIFSSIQLCTMVLLTV) threads the bilayer. Residues 37 to 48 (RFNSFKVGREYA) are Cytoplasmic-facing. The helical transmembrane segment at 49–69 (VFTFAGMSFNCFLLPIKMGLL) threads the bilayer. Over 70 to 82 (SGHWSLPRDFCAI) the chain is Extracellular. A helical transmembrane segment spans residues 83–103 (LLYIDDFSIYFSSWSLVFMAI). Residues 104 to 122 (ERINHFCYSTPLLNENSKA) lie on the Cytoplasmic side of the membrane. Residues 123 to 143 (LAKVCFPIVWIISGVQALQML) traverse the membrane as a helical segment. At 144-168 (NNYKATALQNETPQCFLAFLRSGYD) the chain is on the extracellular side. Residues 169-189 (MWLMLVYSVMIPVMLVFIYIY) form a helical membrane-spanning segment. The Cytoplasmic portion of the chain corresponds to 190–199 (SKNFMLLKDE). Residues 200 to 220 (LSTVTTYLCIYLLLGTIAHLP) form a helical membrane-spanning segment. The Extracellular portion of the chain corresponds to 221-238 (KAGLSEIESDKIFYGLRD). Residues 239–259 (IFMALPVLKVYYIPVMAYCMA) form a helical membrane-spanning segment. The Cytoplasmic segment spans residues 260–301 (CDDHTVPVRLCSIWLVNLCKKCFSCTRREKESDLEVGIKMLK).

Belongs to the G-protein coupled receptor 1 family.

Its subcellular location is the host cell membrane. The polypeptide is G-protein coupled receptor homolog U51 (U51) (Homo sapiens (Human)).